Reading from the N-terminus, the 310-residue chain is tRNA dimethylallyltransferase (310 aa).

An ATP-binding site is contributed by 14-21; the sequence is GPTASGKT. 16–21 serves as a coordination point for substrate; the sequence is TASGKT. The interval 39-42 is interaction with substrate tRNA; it reads DSMQ.

The protein belongs to the IPP transferase family. Monomer. Mg(2+) serves as cofactor.

It catalyses the reaction adenosine(37) in tRNA + dimethylallyl diphosphate = N(6)-dimethylallyladenosine(37) in tRNA + diphosphate. Catalyzes the transfer of a dimethylallyl group onto the adenine at position 37 in tRNAs that read codons beginning with uridine, leading to the formation of N6-(dimethylallyl)adenosine (i(6)A). The chain is tRNA dimethylallyltransferase from Corynebacterium jeikeium (strain K411).